The chain runs to 300 residues: MAEEVSSLMKATVLMRQPGRVQEIVGALRRGGGDRLQVISDFDMTLSRFAYNGQRCPSSHNILDNSKIISEDCRKELTELFHHYYPIEIDPHRTIKEKLPHMVQWWSKAHSLLCQQRIQKVQIAQVVGESTAMLREGYKTFFDTLYQNNIPLFIFSAGIGDILEEIIRQMKVFHPNIHIVSNYMDFSEDGFLKGFKGQLIHTYNKNSSVCENSSYFQQLQNKTNIILLGDSIGDLTMADGVPGVQNILKIGFLNDKVEERRERYMDSYDIVLEKDETLDVVNGLLRHILYQGDCVELQGS.

D41 serves as the catalytic Nucleophile. Residues D41 and D43 each contribute to the Mg(2+) site. The active-site Proton donor is D43. Residue E88 participates in CMP binding. Position 88 (E88) interacts with N(7)-methyl-GMP. Residues 156-157 (SA) and K205 each bind substrate. A Mg(2+)-binding site is contributed by D230. K256 carries the N6-acetyllysine modification.

Belongs to the pyrimidine 5'-nucleotidase family. Monomer.

The protein resides in the cytoplasm. The catalysed reaction is N(7)-methyl-GMP + H2O = N(7)-methylguanosine + phosphate. It carries out the reaction CMP + H2O = cytidine + phosphate. The enzyme catalyses a ribonucleoside 5'-phosphate + H2O = a ribonucleoside + phosphate. In terms of biological role, specifically hydrolyzes 7-methylguanosine monophosphate (m(7)GMP) to 7-methylguanosine and inorganic phosphate. The specific activity for m(7)GMP may protect cells against undesired salvage of m(7)GMP and its incorporation into nucleic acids. Also has weak activity for CMP. UMP and purine nucleotides are poor substrates. The polypeptide is 7-methylguanosine phosphate-specific 5'-nucleotidase (Nt5c3b) (Mus musculus (Mouse)).